The following is a 268-amino-acid chain: MTAAEAPLPPLAPRERTATTAAERRTGSPLAVSLSGVRKSFGDKTVLSGIDLEITRGEFVVLLGPSGTGKTTLLRLLSGLEPPDGGDVLVPRQRTVVYQEPRLIPSKRVLANVSVGQKRAQLTRDNARRALAEVNLADKERAWPATLSGGEAQRVALARALVREPELLLLDEPFAALDALTRLQMQDLVGDLVARHRPAVLLVTHDVDEAVRLADRVLILDNGGFAVDVDIDLPRPRDRNDPEALRYRATFLAQLGVGRPSSTRQDIS.

The disordered stretch occupies residues M1–G27. Residues P13–T26 show a composition bias toward basic and acidic residues. The ABC transporter domain maps to V32–Y247. Residue G64–T71 participates in ATP binding.

It belongs to the ABC transporter superfamily. Aliphatic sulfonates importer (TC 3.A.1.17.2) family. As to quaternary structure, the complex is composed of two ATP-binding proteins (SsuB), two transmembrane proteins (SsuC) and a solute-binding protein (SsuA).

It is found in the cell membrane. It catalyses the reaction ATP + H2O + aliphatic sulfonate-[sulfonate-binding protein]Side 1 = ADP + phosphate + aliphatic sulfonateSide 2 + [sulfonate-binding protein]Side 1.. Its function is as follows. Part of the ABC transporter complex SsuABC involved in aliphatic sulfonates import. Responsible for energy coupling to the transport system. The sequence is that of Aliphatic sulfonates import ATP-binding protein SsuB 3 from Rhodococcus jostii (strain RHA1).